A 115-amino-acid polypeptide reads, in one-letter code: Holo-[acyl-carrier-protein] synthase (115 aa).

Mg(2+)-binding residues include Asp8 and Glu50.

Belongs to the P-Pant transferase superfamily. AcpS family. Requires Mg(2+) as cofactor.

It localises to the cytoplasm. The catalysed reaction is apo-[ACP] + CoA = holo-[ACP] + adenosine 3',5'-bisphosphate + H(+). In terms of biological role, transfers the 4'-phosphopantetheine moiety from coenzyme A to a Ser of acyl-carrier-protein. In Arthrobacter sp. (strain FB24), this protein is Holo-[acyl-carrier-protein] synthase.